A 1393-amino-acid polypeptide reads, in one-letter code: DNA-directed RNA polymerase subunit beta'' (1393 aa).

Zn(2+)-binding residues include Cys-224, Cys-295, Cys-302, and Cys-305.

Belongs to the RNA polymerase beta' chain family. RpoC2 subfamily. In plastids the minimal PEP RNA polymerase catalytic core is composed of four subunits: alpha, beta, beta', and beta''. When a (nuclear-encoded) sigma factor is associated with the core the holoenzyme is formed, which can initiate transcription. Zn(2+) serves as cofactor.

The protein resides in the plastid. The protein localises to the chloroplast. It carries out the reaction RNA(n) + a ribonucleoside 5'-triphosphate = RNA(n+1) + diphosphate. DNA-dependent RNA polymerase catalyzes the transcription of DNA into RNA using the four ribonucleoside triphosphates as substrates. This is DNA-directed RNA polymerase subunit beta'' from Manihot esculenta (Cassava).